The following is a 619-amino-acid chain: 1-deoxy-D-xylulose-5-phosphate synthase (619 aa).

Residues H74 and 115–117 (GHS) contribute to the thiamine diphosphate site. A Mg(2+)-binding site is contributed by D146. Thiamine diphosphate-binding positions include 147–148 (GA), N175, Y285, and E365. Residue N175 coordinates Mg(2+).

It belongs to the transketolase family. DXPS subfamily. Homodimer. It depends on Mg(2+) as a cofactor. Requires thiamine diphosphate as cofactor.

The catalysed reaction is D-glyceraldehyde 3-phosphate + pyruvate + H(+) = 1-deoxy-D-xylulose 5-phosphate + CO2. Its pathway is metabolic intermediate biosynthesis; 1-deoxy-D-xylulose 5-phosphate biosynthesis; 1-deoxy-D-xylulose 5-phosphate from D-glyceraldehyde 3-phosphate and pyruvate: step 1/1. Its function is as follows. Catalyzes the acyloin condensation reaction between C atoms 2 and 3 of pyruvate and glyceraldehyde 3-phosphate to yield 1-deoxy-D-xylulose-5-phosphate (DXP). In Clostridium perfringens (strain SM101 / Type A), this protein is 1-deoxy-D-xylulose-5-phosphate synthase.